The chain runs to 252 residues: Putative hydro-lyase OB3382 (252 aa).

Belongs to the D-glutamate cyclase family.

The protein is Putative hydro-lyase OB3382 of Oceanobacillus iheyensis (strain DSM 14371 / CIP 107618 / JCM 11309 / KCTC 3954 / HTE831).